The sequence spans 244 residues: DNA repair protein RecO (244 aa).

This sequence belongs to the RecO family.

Functionally, involved in DNA repair and RecF pathway recombination. This Polynucleobacter necessarius subsp. necessarius (strain STIR1) protein is DNA repair protein RecO.